Reading from the N-terminus, the 193-residue chain is dCTP deaminase (193 aa).

DCTP contacts are provided by residues 110 to 115 (RSSLAR), Asp128, 136 to 138 (VLE), Tyr171, Lys178, and Gln182. Residue Glu138 is the Proton donor/acceptor of the active site. The interval 169–193 (RPYNRREDAKYRNQQGAVASRIDKD) is disordered.

This sequence belongs to the dCTP deaminase family. As to quaternary structure, homotrimer.

It catalyses the reaction dCTP + H2O + H(+) = dUTP + NH4(+). It participates in pyrimidine metabolism; dUMP biosynthesis; dUMP from dCTP (dUTP route): step 1/2. Functionally, catalyzes the deamination of dCTP to dUTP. This is dCTP deaminase from Escherichia coli O1:K1 / APEC.